We begin with the raw amino-acid sequence, 274 residues long: NAD-dependent protein deacetylase (274 aa).

The region spanning 1-274 (MDSRMSDLQA…CDEVLAEVVS (274 aa)) is the Deacetylase sirtuin-type domain. NAD(+) is bound by residues 26 to 46 (GAGC…GQWK) and 104 to 107 (QNVD). His-122 functions as the Proton acceptor in the catalytic mechanism. Zn(2+) is bound by residues Cys-130, Cys-133, Cys-181, and Cys-184. NAD(+)-binding positions include 221-223 (GSS), 247-249 (NLG), and Cys-265.

The protein belongs to the sirtuin family. Class II subfamily. The cofactor is Zn(2+).

The protein resides in the cytoplasm. It carries out the reaction N(6)-acetyl-L-lysyl-[protein] + NAD(+) + H2O = 2''-O-acetyl-ADP-D-ribose + nicotinamide + L-lysyl-[protein]. Functionally, NAD-dependent protein deacetylase which modulates the activities of several enzymes which are inactive in their acetylated form. This is NAD-dependent protein deacetylase from Bordetella bronchiseptica (strain ATCC BAA-588 / NCTC 13252 / RB50) (Alcaligenes bronchisepticus).